The chain runs to 395 residues: GPI-anchor transamidase (395 aa).

A signal peptide spans 1 to 27; it reads MVDTCFLSRGLTTLAGLLLLPFGSLAA. The Lumenal segment spans residues 28 to 368; the sequence is SQIEDQAEQF…PKLKDWHPPG (341 aa). Residues Asp-79, Ile-82, Glu-118, and Asp-120 each contribute to the Ca(2+) site. Residue His-164 is the Proton donor of the active site. The active-site Nucleophile; acyl-thioester intermediate is Cys-206. A protein-binding residues include Cys-206, Ser-232, and Ser-234. The autoinhibitory loop stretch occupies residues 231-236; that stretch reads DSLSHQ. Cys-275 and Cys-280 are disulfide-bonded. Residues 369 to 385 form a helical membrane-spanning segment; the sequence is GFILGLWALIIMVFFKT. Residues 386-395 are Cytoplasmic-facing; sequence YGIKHMKFIF.

Belongs to the peptidase C13 family. Heteropentamer. Part of the GPI-anchor transamidase complex, consisting of PIGK, PIGT, PIGS, PIGU and GAA1. Interacts with GPAA1. Interacts with PIGT; this interaction, via a disulfide link, stabilizes the expression of GAA1 and PIGK and links them to PIGS. Post-translationally, the disulfide bond between PIGK/GPI8 and PIGT is important for normal enzyme activity.

It localises to the endoplasmic reticulum membrane. The protein operates within glycolipid biosynthesis; glycosylphosphatidylinositol-anchor biosynthesis. In the absence of proproteins substrates, exists in an inactive state with a disrupted catalytic site by an autoinhibitory loop. The binding of proprotein substrates, particularly the CSP region, to GPI-T triggers concerted conformational changes that alleviate the inhibition by the autoinhibitory loop. Meanwhile, proprotein residues near the omega- site induce the formation of a catalytic cleft for catalysis, following which the products are released and GPI-T reverts to the inactive state. Its function is as follows. Catalytic subunit of the glycosylphosphatidylinositol-anchor (GPI-anchor) transamidase (GPI-T) complex that catalyzes the formation of the linkage between a proprotein and a GPI-anchor and participates in GPI anchored protein biosynthesis. Recognizes diverse proproteins at a C-terminal signal peptide (CSP) region that lacks consensus sequence and replaces it with a GPI-anchor via a transamidation reaction. Transamidation catalysis reaction follows a two-phase mechanism. In the acyl-enzyme phase, the carbonyl group of the proproteins's omega-site undergoes a nucleophilic attack forming an enzyme-substrate thioester bond. Followed by a general acid catalysis that allows CSP releasing, regenerating the carbonyl, and forming the acyl-enzyme intermediate. In the GPI-anchor attachment phase, the amino group of the GPI-anchor's ethanolamine phosphate, the one on third mannose (EtNP3), mediates a nucleophilic attack on the carbonyl of the acyl-enzyme intermediate, replacing the CSP, allowing GPI-anchor attachment to the omega-residue, therefore forming the product and freeing the enzyme. This chain is GPI-anchor transamidase, found in Bos taurus (Bovine).